A 510-amino-acid chain; its full sequence is UDP-N-acetylmuramate--L-alanine ligase (510 aa).

The segment at 1-25 (MVETVGGKDAVAPAPARSPSPPAKN) is disordered. 140-146 (GTHGKTT) provides a ligand contact to ATP.

Belongs to the MurCDEF family.

The protein localises to the cytoplasm. It carries out the reaction UDP-N-acetyl-alpha-D-muramate + L-alanine + ATP = UDP-N-acetyl-alpha-D-muramoyl-L-alanine + ADP + phosphate + H(+). Its pathway is cell wall biogenesis; peptidoglycan biosynthesis. Cell wall formation. The chain is UDP-N-acetylmuramate--L-alanine ligase from Synechococcus sp. (strain JA-3-3Ab) (Cyanobacteria bacterium Yellowstone A-Prime).